The sequence spans 806 residues: U3 small nucleolar RNA-associated protein 17 (806 aa).

4 WD repeats span residues 266–305 (WHAN…RQFL), 448–489 (RNGL…KTWV), 499–538 (GNLE…SAWK), and 598–635 (PHGG…VQWT).

In terms of assembly, component of the ribosomal small subunit (SSU) processome.

It is found in the nucleus. Its subcellular location is the nucleolus. Involved in nucleolar processing of pre-18S ribosomal RNA. Required for optimal pre-ribosomal RNA transcription by RNA polymerase I together with a subset of U3 proteins required for transcription (t-UTPs). This is U3 small nucleolar RNA-associated protein 17 (utp17) from Schizosaccharomyces pombe (strain 972 / ATCC 24843) (Fission yeast).